A 57-amino-acid chain; its full sequence is Potassium channel toxin alpha-KTx 26.3 (57 aa).

The N-terminal stretch at 1 to 15 is a signal peptide; the sequence is MSGLSVFILIALVLS. Positions 16–24 are excised as a propeptide; sequence VIIDVLNNS. Disulfide bonds link Cys-30–Cys-48, Cys-34–Cys-53, and Cys-38–Cys-55.

This sequence belongs to the short scorpion toxin superfamily. Potassium channel inhibitor family. Alpha-KTx 26 subfamily. In terms of tissue distribution, expressed by the venom gland.

It localises to the secreted. Functionally, recombinant toxin that reversibly inhibits the potassium current of mKv1.3/KCNA3 channel stably expressed in COS7 cells (IC(50)=150 nM). In Mesobuthus gibbosus (Mediterranean checkered scorpion), this protein is Potassium channel toxin alpha-KTx 26.3.